The sequence spans 101 residues: Isochorismate pyruvate lyase (101 aa).

The Chorismate mutase domain maps to 4–94 (PEDCTGLADI…WYIAEQIKYW (91 aa)). 4 residues coordinate substrate: Arg14, Arg31, Lys42, and Gln90.

In terms of assembly, dimer of dimers.

It catalyses the reaction isochorismate = salicylate + pyruvate. It carries out the reaction chorismate = prephenate. It functions in the pathway siderophore biosynthesis; salicylate biosynthesis. With respect to regulation, inhibited by endo-oxabicyclic diacid resembling to the conformation of the transition state. Its function is as follows. Involved in the incorporation of salicylate into the siderophore pyochelin. Catalyzes the elimination of the enolpyruvyl side chain from isochorismate to yield salicylate and pyruvate via a rare pericyclic hydrogen transfer mechanism from C2 to C5. PchB also catalyzes the nonphysiological Claisen rearrangement of chorismate to prephenate in which the pyruvylenol tail is transferred from a C3 ether linkage to a C1-C9 linkage. This chain is Isochorismate pyruvate lyase, found in Pseudomonas aeruginosa (strain ATCC 15692 / DSM 22644 / CIP 104116 / JCM 14847 / LMG 12228 / 1C / PRS 101 / PAO1).